Reading from the N-terminus, the 249-residue chain is Triosephosphate isomerase (249 aa).

8 to 10 is a binding site for substrate; that stretch reads NWK. The active-site Electrophile is H95. E163 (proton acceptor) is an active-site residue. Substrate-binding residues include G169 and S209.

This sequence belongs to the triosephosphate isomerase family. In terms of assembly, homodimer.

The protein resides in the cytoplasm. It catalyses the reaction D-glyceraldehyde 3-phosphate = dihydroxyacetone phosphate. Its pathway is carbohydrate biosynthesis; gluconeogenesis. It functions in the pathway carbohydrate degradation; glycolysis; D-glyceraldehyde 3-phosphate from glycerone phosphate: step 1/1. In terms of biological role, involved in the gluconeogenesis. Catalyzes stereospecifically the conversion of dihydroxyacetone phosphate (DHAP) to D-glyceraldehyde-3-phosphate (G3P). The polypeptide is Triosephosphate isomerase (Orientia tsutsugamushi (strain Boryong) (Rickettsia tsutsugamushi)).